The primary structure comprises 401 residues: Argininosuccinate synthase (401 aa).

8 to 16 contacts ATP; it reads AYSGGLDTS. Residue Y85 coordinates L-citrulline. Position 115 (G115) interacts with ATP. The L-aspartate site is built by T117, N121, and D122. N121 provides a ligand contact to L-citrulline. R125, S173, S182, E258, and Y270 together coordinate L-citrulline.

It belongs to the argininosuccinate synthase family. Type 1 subfamily. In terms of assembly, homotetramer.

The protein resides in the cytoplasm. The enzyme catalyses L-citrulline + L-aspartate + ATP = 2-(N(omega)-L-arginino)succinate + AMP + diphosphate + H(+). The protein operates within amino-acid biosynthesis; L-arginine biosynthesis; L-arginine from L-ornithine and carbamoyl phosphate: step 2/3. The polypeptide is Argininosuccinate synthase (Staphylococcus saprophyticus subsp. saprophyticus (strain ATCC 15305 / DSM 20229 / NCIMB 8711 / NCTC 7292 / S-41)).